A 618-amino-acid chain; its full sequence is DNA mismatch repair protein MutL (618 aa).

Residues 367-381 are compositionally biased toward low complexity; that stretch reads EPTAAREPATPRYSG. A disordered region spans residues 367-402; that stretch reads EPTAAREPATPRYSGGASGGNGGRQSAGGWPHAQPG. Residues 382 to 392 show a composition bias toward gly residues; sequence GASGGNGGRQS.

This sequence belongs to the DNA mismatch repair MutL/HexB family.

Functionally, this protein is involved in the repair of mismatches in DNA. It is required for dam-dependent methyl-directed DNA mismatch repair. May act as a 'molecular matchmaker', a protein that promotes the formation of a stable complex between two or more DNA-binding proteins in an ATP-dependent manner without itself being part of a final effector complex. The polypeptide is DNA mismatch repair protein MutL (Salmonella gallinarum (strain 287/91 / NCTC 13346)).